A 437-amino-acid polypeptide reads, in one-letter code: Phosphomethylpyrimidine synthase (437 aa).

Substrate is bound by residues Asn69, Met98, Tyr127, His163, 185–187 (SRG), 226–229 (DACR), and Glu265. A Zn(2+)-binding site is contributed by His269. Tyr292 serves as a coordination point for substrate. His333 contacts Zn(2+). Cys409, Cys412, and Cys416 together coordinate [4Fe-4S] cluster.

Belongs to the ThiC family. [4Fe-4S] cluster serves as cofactor.

The enzyme catalyses 5-amino-1-(5-phospho-beta-D-ribosyl)imidazole + S-adenosyl-L-methionine = 4-amino-2-methyl-5-(phosphooxymethyl)pyrimidine + CO + 5'-deoxyadenosine + formate + L-methionine + 3 H(+). Its pathway is cofactor biosynthesis; thiamine diphosphate biosynthesis. Its function is as follows. Catalyzes the synthesis of the hydroxymethylpyrimidine phosphate (HMP-P) moiety of thiamine from aminoimidazole ribotide (AIR) in a radical S-adenosyl-L-methionine (SAM)-dependent reaction. In Clostridium botulinum (strain Loch Maree / Type A3), this protein is Phosphomethylpyrimidine synthase.